Here is a 189-residue protein sequence, read N- to C-terminus: Elongation factor P (189 aa).

Belongs to the elongation factor P family.

It is found in the cytoplasm. The protein operates within protein biosynthesis; polypeptide chain elongation. Its function is as follows. Involved in peptide bond synthesis. Stimulates efficient translation and peptide-bond synthesis on native or reconstituted 70S ribosomes in vitro. Probably functions indirectly by altering the affinity of the ribosome for aminoacyl-tRNA, thus increasing their reactivity as acceptors for peptidyl transferase. The chain is Elongation factor P from Orientia tsutsugamushi (strain Boryong) (Rickettsia tsutsugamushi).